The following is a 166-amino-acid chain: MAINLEDKKAIVAEVNEAAKVALSAVVVDARGVTVGAMTGLRKEAREAGVYVRVVRNTLLKRAVAGTSYEVLNDAFTGPTLIAFSNEHPGAAARLFKEFAKGQDKFEIKAASFEGKFLAANEIDVLASLPTRDEAIAKLMSVIQGATSKLARTLAAIRDQKEAAAA.

The protein belongs to the universal ribosomal protein uL10 family. As to quaternary structure, part of the ribosomal stalk of the 50S ribosomal subunit. The N-terminus interacts with L11 and the large rRNA to form the base of the stalk. The C-terminus forms an elongated spine to which L12 dimers bind in a sequential fashion forming a multimeric L10(L12)X complex.

In terms of biological role, forms part of the ribosomal stalk, playing a central role in the interaction of the ribosome with GTP-bound translation factors. The protein is Large ribosomal subunit protein uL10 of Pseudomonas fluorescens (strain Pf0-1).